Reading from the N-terminus, the 100-residue chain is NADH-quinone oxidoreductase subunit K (100 aa).

The next 3 helical transmembrane spans lie at Leu-4–Ile-24, Leu-28–Val-48, and Val-60–Leu-80.

Belongs to the complex I subunit 4L family. In terms of assembly, NDH-1 is composed of 13 different subunits. Subunits NuoA, H, J, K, L, M, N constitute the membrane sector of the complex.

It is found in the cell inner membrane. The catalysed reaction is a quinone + NADH + 5 H(+)(in) = a quinol + NAD(+) + 4 H(+)(out). In terms of biological role, NDH-1 shuttles electrons from NADH, via FMN and iron-sulfur (Fe-S) centers, to quinones in the respiratory chain. The immediate electron acceptor for the enzyme in this species is believed to be ubiquinone. Couples the redox reaction to proton translocation (for every two electrons transferred, four hydrogen ions are translocated across the cytoplasmic membrane), and thus conserves the redox energy in a proton gradient. This Musicola paradisiaca (strain Ech703) (Dickeya paradisiaca) protein is NADH-quinone oxidoreductase subunit K.